Here is a 793-residue protein sequence, read N- to C-terminus: Potassium transporter 18 (793 aa).

Topologically, residues 1–53 (METRTNEYSRKGAMWELERNLDQPMDAEAGRLRNMYREKTYPTILLLRLAFQS) are cytoplasmic. Residues 54-74 (LGVVFGDLGTSPLYVFYNIFP) traverse the membrane as a helical segment. Over 75–86 (HGIEDTEQVIGA) the chain is Extracellular. Residues 87–107 (LSLIIYSLTLIPLVKYVFIVL) traverse the membrane as a helical segment. Residues 108 to 172 (RANDNGQGGT…WLEGHQFRKN (65 aa)) lie on the Cytoplasmic side of the membrane. The chain crosses the membrane as a helical span at residues 173–193 (LILILVLFGTCMAVGDGILTP). Residues 194–214 (AISVLSATGGIQVEEGRMRND) lie on the Extracellular side of the membrane. The helical transmembrane segment at 215-235 (VVVIISVLILIGLFSMQHYGT) threads the bilayer. The Cytoplasmic portion of the chain corresponds to 236 to 237 (DK). A helical membrane pass occupies residues 238-258 (VSWLFAPIVFVWFILIGILGA). At 259–287 (VNICKYDHSVLKAFNPVYVYRYFKRGKTS) the chain is on the extracellular side. A helical membrane pass occupies residues 288–308 (WTSLGGIMLSITGTEALFADL). A topological domain (cytoplasmic) is located at residue serine 309. The chain crosses the membrane as a helical span at residues 310 to 330 (YFPVQAIQIAFTVVVFPCLLL). At 331–351 (QYTGQAAFIAANTNQVSHAFY) the chain is on the extracellular side. The helical transmembrane segment at 352 to 372 (ISLPAPILWPAFAVATAAAIV) threads the bilayer. Residues 373–409 (ASQATISATYSIIKQALALGCFPRVKIIHTSKKYLGQ) are Cytoplasmic-facing. A helical membrane pass occupies residues 410-430 (IYSPDINWILMVFCIAVTAGF). The Extracellular segment spans residues 431-442 (KNQSQIANAYGT). A glycan (N-linked (GlcNAc...) asparagine) is linked at asparagine 432. Residues 443–463 (AVIMVMLVTTFLMIPIMLLVW) form a helical membrane-spanning segment. Over 464-468 (RSHWT) the chain is Cytoplasmic. A helical transmembrane segment spans residues 469 to 489 (LVVAFTVLSLLVEIPYFSAVV). Residues 490–494 (RKIDQ) lie on the Extracellular side of the membrane. The helical transmembrane segment at 495 to 515 (GGWVPLVFAAGFMIIMYVWHY) threads the bilayer. Over 516–793 (GTLKRYEFEM…MLNVGQVFYV (278 aa)) the chain is Cytoplasmic.

The protein belongs to the HAK/KUP transporter (TC 2.A.72.3) family.

It localises to the membrane. In terms of biological role, high-affinity potassium transporter. This is Potassium transporter 18 (HAK18) from Oryza sativa subsp. japonica (Rice).